We begin with the raw amino-acid sequence, 170 residues long: Phosphopantetheine adenylyltransferase (170 aa).

Residue Thr18 participates in substrate binding. ATP is bound by residues 18 to 19 and His26; that span reads TF. Substrate-binding residues include Lys50, Leu84, and Arg98. ATP contacts are provided by residues 99 to 101, Glu109, and 134 to 140; these read GLR and WIYISSS.

The protein belongs to the bacterial CoaD family. As to quaternary structure, homohexamer. Requires Mg(2+) as cofactor.

The protein resides in the cytoplasm. It carries out the reaction (R)-4'-phosphopantetheine + ATP + H(+) = 3'-dephospho-CoA + diphosphate. It participates in cofactor biosynthesis; coenzyme A biosynthesis; CoA from (R)-pantothenate: step 4/5. Reversibly transfers an adenylyl group from ATP to 4'-phosphopantetheine, yielding dephospho-CoA (dPCoA) and pyrophosphate. The polypeptide is Phosphopantetheine adenylyltransferase (Desulfotalea psychrophila (strain LSv54 / DSM 12343)).